We begin with the raw amino-acid sequence, 335 residues long: Trans-3-hydroxy-L-proline dehydratase (335 aa).

Cysteine 91 serves as the catalytic Proton acceptor. Substrate contacts are provided by residues 92–93 (GH), aspartate 251, and 256–257 (GS).

The protein belongs to the proline racemase family.

It catalyses the reaction trans-3-hydroxy-L-proline = 1-pyrroline-2-carboxylate + H2O. Functionally, catalyzes the dehydration of trans-3-hydroxy-L-proline (t3LHyp) to Delta(1)-pyrroline-2-carboxylate (Pyr2C). Is likely involved in a degradation pathway that converts t3LHyp to L-proline. Displays neither trans-4-hydroxy-L-proline (t4LHyp) epimerase nor proline racemase activity. This is Trans-3-hydroxy-L-proline dehydratase from Burkholderia ambifaria (strain ATCC BAA-244 / DSM 16087 / CCUG 44356 / LMG 19182 / AMMD) (Burkholderia cepacia (strain AMMD)).